The primary structure comprises 733 residues: LMBR1 domain-containing protein 2 homolog A (733 aa).

Helical transmembrane passes span 1–21, 33–53, 125–145, 163–183, and 191–211; these read MIVI…KILH, VYIS…LVPI, FYFG…SFVL, AYLY…LLAV, and MVGF…IILM. A coiled-coil region spans residues 232-266; sequence LKHLQFKAVELLNSKKKANEELIATMKVIRRIQEK. Transmembrane regions (helical) follow at residues 386 to 406, 423 to 443, 468 to 488, and 513 to 533; these read AAIV…ALAF, VSNI…ALTC, SIIF…YNFI, and VAPF…VIVC. Disordered regions lie at residues 581–641, 649–668, and 674–696; these read NNIK…TSSA, LKKS…PYEQ, and ESND…TYNA. The segment covering 596–619 has biased composition (polar residues); the sequence is DSTSNNPKQIFKSGSTTISKQSPP. Composition is skewed to low complexity over residues 620–640 and 654–664; these read NLNV…NTSS and NNNNNNNNNNN. Acidic residues predominate over residues 674–685; the sequence is ESNDFDDDDDIE.

Belongs to the LIMR family.

The protein localises to the membrane. This is LMBR1 domain-containing protein 2 homolog A from Dictyostelium discoideum (Social amoeba).